We begin with the raw amino-acid sequence, 133 residues long: Minor spike protein H (133 aa).

Belongs to the microviridae H protein family.

It localises to the virion. Probably triggers with protein G the injection of the phage DNA into the host upon conformational changes induced by virus-host receptor interaction. The protein is Minor spike protein H of Spiroplasma virus 4 (SpV4).